The following is a 179-amino-acid chain: Replication restart protein DnaT (179 aa).

Positions 155 to 179 are disordered; the sequence is NGGLPKRDVNTVSEPDSQIPPGFRG.

It belongs to the DnaT family. Homooligomerizes. Interacts with PriB. Component of the replication restart primosome. Primosome assembly occurs via a 'hand-off' mechanism. PriA binds to replication forks, subsequently PriB then DnaT bind; DnaT then displaces ssDNA to generate the helicase loading substrate.

Functionally, involved in the restart of stalled replication forks, which reloads the replicative helicase on sites other than the origin of replication. Can function in multiple replication restart pathways. Displaces ssDNA from a PriB-ssDNA complex. Probably forms a spiral filament on ssDNA. The chain is Replication restart protein DnaT from Escherichia coli O8 (strain IAI1).